The sequence spans 107 residues: Circadian clock oscillator protein KaiB (107 aa).

The protein belongs to the KaiB family. May undergo a major conformational rearrangment; in the free state forms homooligomers. When bound to KaiC switches to a monomeric thioredoxin-fold (KaiB(fs)). The active oscillator complex is probably KaiC(6):KaiB(6).

Functionally, component of the KaiBC clock protein complex, which constitutes the main circadian regulator in cyanobacteria; it may modify the ATPase activity of KaiC. Does not stimulate dephosphorylation of endogenous KaiC, although it does stimulate dephosphorylation of KiaC from S.elongatus strain PCC 7942. Reduces the ATPase activity of KaiC by about half in vitro, which may be its function in vivo. In terms of biological role, may be a metamorphic protein which reversibly switches between an inactive tetrameric fold and a rare, thioredoxin-like monomeric fold (KaiB(fs)). KaiB(fs) binds phospho-KaiC, and perhaps clock output effectors. In Prochlorococcus marinus subsp. pastoris (strain CCMP1986 / NIES-2087 / MED4), this protein is Circadian clock oscillator protein KaiB.